The chain runs to 459 residues: MLLSFDEVCAAVQGARVCDARGARGFDGVSFDSRAVVPRDLFIPLRGAHVDGHTFVEEALQKGAVATLIDQRYPHAGEYVAWCTRFGAACIAVHDTLRALQDLASFYCKKFPALIRIGITGSSGKTTVKEMARAVFSERYRVVATPGNLNSEIGLPQSLFFVRAEHEVGIFELGMNRRGEMRTLAQILVPHYAIITNVGCAHVGILGTQQAIAEEKKEIFSQFTEHSVGFVPDDAYRVFLSNIPYGRVVVYDQGGRGLATEVIDEGLRGSRVLYQGRWIRVPLPGVHNAKNALAVIALAAQVGLPAEEIQRGMERVKPPFGRSHVVCASLTFLLDCYNANPDSMAAALHLCAHISAVSKVYVLGDMGELGVTAAEAHYRVCVLAAASDARAVYVFGPEFCRAVRKVSWGRKRVYAFALEELSALQETLDAQLRRGDFVLVKGSRSVALERLEPLLRKER.

121 to 127 lines the ATP pocket; sequence GSSGKTT.

The protein belongs to the MurCDEF family. MurF subfamily.

The protein resides in the cytoplasm. The catalysed reaction is D-alanyl-D-alanine + UDP-N-acetyl-alpha-D-muramoyl-L-alanyl-gamma-D-glutamyl-meso-2,6-diaminopimelate + ATP = UDP-N-acetyl-alpha-D-muramoyl-L-alanyl-gamma-D-glutamyl-meso-2,6-diaminopimeloyl-D-alanyl-D-alanine + ADP + phosphate + H(+). It participates in cell wall biogenesis; peptidoglycan biosynthesis. Involved in cell wall formation. Catalyzes the final step in the synthesis of UDP-N-acetylmuramoyl-pentapeptide, the precursor of murein. This chain is UDP-N-acetylmuramoyl-tripeptide--D-alanyl-D-alanine ligase, found in Treponema pallidum (strain Nichols).